The primary structure comprises 856 residues: Translation initiation factor IF-2 (856 aa).

The region spanning 356 to 526 (PRAPVVTVMG…LLIADLLELK (171 aa)) is the tr-type G domain. Residues 365–372 (GHVDHGKT) are G1. 365-372 (GHVDHGKT) is a binding site for GTP. The tract at residues 390-394 (GITQH) is G2. Residues 412-415 (DTPG) form a G3 region. GTP contacts are provided by residues 412-416 (DTPGH) and 466-469 (NKID). The G4 stretch occupies residues 466-469 (NKID). Positions 502–504 (SAK) are G5.

It belongs to the TRAFAC class translation factor GTPase superfamily. Classic translation factor GTPase family. IF-2 subfamily.

The protein localises to the cytoplasm. Functionally, one of the essential components for the initiation of protein synthesis. Protects formylmethionyl-tRNA from spontaneous hydrolysis and promotes its binding to the 30S ribosomal subunits. Also involved in the hydrolysis of GTP during the formation of the 70S ribosomal complex. The protein is Translation initiation factor IF-2 of Ehrlichia ruminantium (strain Welgevonden).